Consider the following 325-residue polypeptide: Foldase protein PrsA (325 aa).

The signal sequence occupies residues 1–20 (MKLMNKIIVPVTASALLLGA). C21 carries N-palmitoyl cysteine lipidation. C21 is lipidated: S-diacylglycerol cysteine. The PpiC domain maps to 139–245 (ENSKKTSHIL…YGYHIIKADK (107 aa)). Disordered regions lie at residues 159 to 200 (EGLS…SAKK) and 303 to 325 (PDKIKQQQQQQSQGGSGLTNSGS).

The protein belongs to the PrsA family.

The protein localises to the cell membrane. The enzyme catalyses [protein]-peptidylproline (omega=180) = [protein]-peptidylproline (omega=0). Its function is as follows. Plays a major role in protein secretion by helping the post-translocational extracellular folding of several secreted proteins. This Staphylococcus epidermidis (strain ATCC 35984 / DSM 28319 / BCRC 17069 / CCUG 31568 / BM 3577 / RP62A) protein is Foldase protein PrsA.